A 506-amino-acid polypeptide reads, in one-letter code: Maturase K (506 aa).

The protein belongs to the intron maturase 2 family. MatK subfamily.

Its subcellular location is the plastid. It localises to the chloroplast. Usually encoded in the trnK tRNA gene intron. Probably assists in splicing its own and other chloroplast group II introns. This Trifolium microcephalum (Small-head clover) protein is Maturase K.